Here is a 361-residue protein sequence, read N- to C-terminus: UDP-N-acetylglucosamine--N-acetylmuramyl-(pentapeptide) pyrophosphoryl-undecaprenol N-acetylglucosamine transferase (361 aa).

UDP-N-acetyl-alpha-D-glucosamine-binding positions include 12–14 (TGG), Asn-124, Arg-163, Ser-189, Ile-241, 260–265 (ALTVSE), and Gln-286.

The protein belongs to the glycosyltransferase 28 family. MurG subfamily.

Its subcellular location is the cell inner membrane. The enzyme catalyses di-trans,octa-cis-undecaprenyl diphospho-N-acetyl-alpha-D-muramoyl-L-alanyl-D-glutamyl-meso-2,6-diaminopimeloyl-D-alanyl-D-alanine + UDP-N-acetyl-alpha-D-glucosamine = di-trans,octa-cis-undecaprenyl diphospho-[N-acetyl-alpha-D-glucosaminyl-(1-&gt;4)]-N-acetyl-alpha-D-muramoyl-L-alanyl-D-glutamyl-meso-2,6-diaminopimeloyl-D-alanyl-D-alanine + UDP + H(+). It functions in the pathway cell wall biogenesis; peptidoglycan biosynthesis. Cell wall formation. Catalyzes the transfer of a GlcNAc subunit on undecaprenyl-pyrophosphoryl-MurNAc-pentapeptide (lipid intermediate I) to form undecaprenyl-pyrophosphoryl-MurNAc-(pentapeptide)GlcNAc (lipid intermediate II). This is UDP-N-acetylglucosamine--N-acetylmuramyl-(pentapeptide) pyrophosphoryl-undecaprenol N-acetylglucosamine transferase from Aeromonas hydrophila subsp. hydrophila (strain ATCC 7966 / DSM 30187 / BCRC 13018 / CCUG 14551 / JCM 1027 / KCTC 2358 / NCIMB 9240 / NCTC 8049).